The chain runs to 194 residues: Translationally-controlled tumor protein homolog 2 (194 aa).

In terms of domain architecture, TCTP spans 1 to 194 (MKLYKDLIGN…IKYGLLQVDV (194 aa)).

It belongs to the TCTP family.

The protein resides in the cytoplasm. In terms of biological role, involved in calcium binding and microtubule stabilization. This Dictyostelium discoideum (Social amoeba) protein is Translationally-controlled tumor protein homolog 2.